Consider the following 1175-residue polypeptide: 1-phosphatidylinositol 4,5-bisphosphate phosphodiesterase beta-4 (1175 aa).

At alanine 2 the chain carries N-acetylalanine. Residues 313–463 (QEMDHPLAHY…LKRKILIKNK (151 aa)) form the PI-PLC X-box domain. Active-site residues include histidine 328 and histidine 375. Residues 482–511 (EAGESASPANILEDDNEEEIESADQEEEAH) form a disordered region. Acidic residues predominate over residues 493-508 (LEDDNEEEIESADQEE). The PI-PLC Y-box domain maps to 565–681 (LSTMINYAQP…GYLLKPDFMR (117 aa)). The region spanning 684–809 (DRTFDPFSET…SLRNEGNKPL (126 aa)) is the C2 domain. Disordered stretches follow at residues 863-895 (ADVPSDTSKNDKKGKANTAKANVTPQSSSELRP) and 1082-1110 (KISMENSKAISQDKSIKNKAERERRVREL). 2 stretches are compositionally biased toward polar residues: residues 881 to 895 (AKANVTPQSSSELRP) and 1085 to 1094 (MENSKAISQD). Threonine 886 carries the post-translational modification Phosphothreonine. Residues 1095–1109 (KSIKNKAERERRVRE) are compositionally biased toward basic and acidic residues.

The cofactor is Ca(2+). Preferentially expressed in the retina.

It is found in the cell membrane. It carries out the reaction a 1,2-diacyl-sn-glycero-3-phospho-(1D-myo-inositol-4,5-bisphosphate) + H2O = 1D-myo-inositol 1,4,5-trisphosphate + a 1,2-diacyl-sn-glycerol + H(+). It catalyses the reaction a 1,2-diacyl-sn-glycero-3-phospho-(1D-myo-inositol) + H2O = 1D-myo-inositol 1-phosphate + a 1,2-diacyl-sn-glycerol + H(+). Functionally, activated phosphatidylinositol-specific phospholipase C enzymes catalyze the production of the second messenger molecules diacylglycerol (DAG) and inositol 1,4,5-trisphosphate (IP3) involved in G-protein coupled receptor signaling pathways. PLCB4 is a direct effector of the endothelin receptor signaling pathway that plays an essential role in lower jaw and middle ear structures development. In Homo sapiens (Human), this protein is 1-phosphatidylinositol 4,5-bisphosphate phosphodiesterase beta-4.